Reading from the N-terminus, the 117-residue chain is Protein Wnt-6 (117 aa).

A lipid anchor (O-palmitoleoyl serine; by PORCN) is attached at Ser-1. An intrachain disulfide couples Cys-83 to Cys-98. Asn-84 is a glycosylation site (N-linked (GlcNAc...) asparagine).

It belongs to the Wnt family. Palmitoleoylation is required for efficient binding to frizzled receptors. Depalmitoleoylation leads to Wnt signaling pathway inhibition.

It is found in the secreted. The protein localises to the extracellular space. Its subcellular location is the extracellular matrix. Ligand for members of the frizzled family of seven transmembrane receptors. Probable developmental protein. May be a signaling molecule which affects the development of discrete regions of tissues. Is likely to signal over only few cell diameters. In Strongylocentrotus purpuratus (Purple sea urchin), this protein is Protein Wnt-6 (WNT-6).